The chain runs to 69 residues: MKLLTVAFSLLLLGQVHASPLVLDKRSSCQLGDVWDLNAADAACSASCAIQHGDKHGGHCDKNKVCVCN.

Residues 1–18 (MKLLTVAFSLLLLGQVHA) form the signal peptide. Positions 19–26 (SPLVLDKR) are excised as a propeptide. Cystine bridges form between Cys-29–Cys-60, Cys-44–Cys-66, and Cys-48–Cys-68.

It belongs to the invertebrate defensin family.

The protein resides in the secreted. Its subcellular location is the target cell membrane. Functionally, shows antibacterial activity against numerous Gram-positive bacteria. It selectively inhibits peptidoglycan biosynthesis through complex formation with the cell wall precursor lipid II (1:1 molar ratio) thus inhibiting cell wall synthesis. The polypeptide is Fungal defensin oryzeasin (Aspergillus oryzae (strain ATCC 42149 / RIB 40) (Yellow koji mold)).